The sequence spans 235 residues: MSATAPIRIAARAQPAKYAFIIFHGLGDSGAGWTFLAEYLQRDPALASAQFVFPTAPVRPITANNFAPATAWLDVRSWLSHESVDLEGFNESMKLVPKLIEEQVAQGIPYERIWIGGFSQGAALTMGTALSFPHRLGGFLSFSGPPSYRWLEHTVSDANTGAPVFQSHGTMDEVFPSSGAEAVHRSFTSQYGFKNHRLKIYDGLGHSISPQLLDDALAFIKANLDAEKPAPRPAL.

Catalysis depends on charge relay system residues Ser119, Asp172, and His206.

Belongs to the AB hydrolase superfamily. AB hydrolase 2 family.

Its subcellular location is the cytoplasm. The protein resides in the nucleus. It carries out the reaction S-hexadecanoyl-L-cysteinyl-[protein] + H2O = L-cysteinyl-[protein] + hexadecanoate + H(+). Its function is as follows. Hydrolyzes fatty acids from S-acylated cysteine residues in proteins with a strong preference for palmitoylated G-alpha proteins over other acyl substrates. Mediates the deacylation of G-alpha proteins such as GPA1 in vivo, but has weak or no activity toward palmitoylated Ras proteins. Has weak lysophospholipase activity in vitro; however such activity may not exist in vivo. This Eremothecium gossypii (strain ATCC 10895 / CBS 109.51 / FGSC 9923 / NRRL Y-1056) (Yeast) protein is Acyl-protein thioesterase 1.